The chain runs to 370 residues: Putative L-lysine 2,3-aminomutase aq_454 (370 aa).

One can recognise a Radical SAM core domain in the interval 107–322 (HRYPDRVLLN…RGRLSGFGIP (216 aa)). Residues Cys121, Cys125, and Cys128 each contribute to the [4Fe-4S] cluster site. An N6-(pyridoxal phosphate)lysine modification is found at Lys334.

Belongs to the radical SAM superfamily. KamA family. [4Fe-4S] cluster is required as a cofactor. The cofactor is pyridoxal 5'-phosphate.

This Aquifex aeolicus (strain VF5) protein is Putative L-lysine 2,3-aminomutase aq_454.